The sequence spans 25 residues: C-reactive protein P2 subunit 4 (25 aa).

Positions 1–25 (GRSLVFPEETANSFVELFPAKELSL) constitute a Pentraxin (PTX) domain.

Belongs to the pentraxin family. In terms of assembly, heteropentamer. Discoid arrangement of 5 non-covalently bound subunits 1, 2, 3 and 4. Requires Ca(2+) as cofactor. In terms of processing, glycosylated.

The protein localises to the secreted. Functionally, displays several functions associated with host defense: it promotes agglutination, bacterial capsular swelling, phagocytosis, and complement fixation through its calcium-dependent binding to phosphorylcholine. This chain is C-reactive protein P2 subunit 4, found in Gadus morhua (Atlantic cod).